We begin with the raw amino-acid sequence, 254 residues long: Distal membrane-arm assembly complex protein 2 (254 aa).

Position 250 is a phosphoserine (Ser-250).

The protein belongs to the ATP synthase subunit s family. Interacts with incompletely assembled mitochondrial NADH:ubiquinone oxidoreductase complex (complex I).

Its subcellular location is the mitochondrion. Its function is as follows. Required for the assembly of the mitochondrial NADH:ubiquinone oxidoreductase complex (complex I). Involved in the assembly of the distal region of complex I. This is Distal membrane-arm assembly complex protein 2 from Rattus norvegicus (Rat).